A 285-amino-acid chain; its full sequence is Bifunctional protein FolD (285 aa).

NADP(+) is bound by residues 165–167 (GRS) and Ser190.

Belongs to the tetrahydrofolate dehydrogenase/cyclohydrolase family. In terms of assembly, homodimer.

The catalysed reaction is (6R)-5,10-methylene-5,6,7,8-tetrahydrofolate + NADP(+) = (6R)-5,10-methenyltetrahydrofolate + NADPH. It catalyses the reaction (6R)-5,10-methenyltetrahydrofolate + H2O = (6R)-10-formyltetrahydrofolate + H(+). It participates in one-carbon metabolism; tetrahydrofolate interconversion. Functionally, catalyzes the oxidation of 5,10-methylenetetrahydrofolate to 5,10-methenyltetrahydrofolate and then the hydrolysis of 5,10-methenyltetrahydrofolate to 10-formyltetrahydrofolate. The protein is Bifunctional protein FolD of Streptococcus pneumoniae serotype 4 (strain ATCC BAA-334 / TIGR4).